Here is a 653-residue protein sequence, read N- to C-terminus: Macrolide export ATP-binding/permease protein MacB (653 aa).

One can recognise an ABC transporter domain in the interval 6–244; the sequence is LALSHICREF…AAASLPADKP (239 aa). Position 42–49 (42–49) interacts with ATP; it reads GSSGSGKS. 4 consecutive transmembrane segments (helical) span residues 277 to 297, 526 to 546, 587 to 607, and 617 to 637; these read FLTM…VALG, LAFL…IGVM, LGGI…NLLL, and FSIG…GYFP.

The protein belongs to the ABC transporter superfamily. Macrolide exporter (TC 3.A.1.122) family. As to quaternary structure, homodimer.

The protein resides in the cell inner membrane. Non-canonical ABC transporter that contains transmembrane domains (TMD), which form a pore in the inner membrane, and an ATP-binding domain (NBD), which is responsible for energy generation. Confers resistance against macrolides. This chain is Macrolide export ATP-binding/permease protein MacB, found in Bradyrhizobium diazoefficiens (strain JCM 10833 / BCRC 13528 / IAM 13628 / NBRC 14792 / USDA 110).